The following is a 707-amino-acid chain: Serine/threonine protein kinase UL97 (707 aa).

Low complexity predominate over residues M1–L14. Disordered regions lie at residues M1 to A32, E115 to Y146, F176 to P199, and E231 to S264. Over residues E115–R127 the composition is skewed to basic and acidic residues. Low complexity predominate over residues G178–G188. Residues L337 to V345 and K359 contribute to the ATP site. Residue D456 is the Proton acceptor of the active site.

Belongs to the protein kinase superfamily. Tyr protein kinase family. HCMV ganciclovir subfamily. Interacts with UL83. In terms of processing, autophosphorylates on serine and threonine residues.

It localises to the virion. The enzyme catalyses L-seryl-[protein] + ATP = O-phospho-L-seryl-[protein] + ADP + H(+). It carries out the reaction L-threonyl-[protein] + ATP = O-phospho-L-threonyl-[protein] + ADP + H(+). Functionally, serine/threonine protein kinase that plays important roles in several processes including nuclear viral egress, viral replication or regulation of host cell cycle progression. Participates in the acquisition of tegument during virion morphogenesis in the nucleus. Redistributes the host nuclear lamina by phosphorylating cellular Lamins-A/C. Plays a role in viral DNA synthesis by phosphorylating the DNA polymerase processivity factor UL44. Stimulates host cell cycle to support viral DNA synthesis by phosphorylating host retinoblastoma/RB1 protein. Additional substrates have been identified including host EF1D or H2B. Also phosphorylates host SAMHD1 and thereby counteracts its antiviral effect by reducing its dNTP hydrolase activity. This chain is Serine/threonine protein kinase UL97 (UL97), found in Human cytomegalovirus (strain Towne) (HHV-5).